The following is a 209-amino-acid chain: Orotate phosphoribosyltransferase (209 aa).

Residues Arg96, Lys100, His102, and 122-130 (EDLISTGGS) each bind 5-phospho-alpha-D-ribose 1-diphosphate. Residue Ser126 coordinates orotate.

Belongs to the purine/pyrimidine phosphoribosyltransferase family. PyrE subfamily. As to quaternary structure, homodimer. Requires Mg(2+) as cofactor.

The catalysed reaction is orotidine 5'-phosphate + diphosphate = orotate + 5-phospho-alpha-D-ribose 1-diphosphate. Its pathway is pyrimidine metabolism; UMP biosynthesis via de novo pathway; UMP from orotate: step 1/2. Its function is as follows. Catalyzes the transfer of a ribosyl phosphate group from 5-phosphoribose 1-diphosphate to orotate, leading to the formation of orotidine monophosphate (OMP). The sequence is that of Orotate phosphoribosyltransferase from Lactococcus lactis subsp. cremoris (strain MG1363).